A 668-amino-acid chain; its full sequence is Patellin-5 (668 aa).

Residues 1 to 263 form a disordered region; it reads MSQDSATTTP…STTTSTVASR (263 aa). Basic and acidic residues-rich tracts occupy residues 55-68, 82-100, 107-125, and 132-150; these read ESNH…EKVT, AAED…ETAK, TAED…ETVK, and VAED…ETVK. Residues 170-186 are compositionally biased toward polar residues; it reads TPETETSEADTSLLVTS. Residues 218 to 231 are compositionally biased toward acidic residues; it reads VEDWTEPELPDEAV. A compositionally biased stretch (pro residues) spans 244 to 254; it reads PEPQTPPPPPS. At Ser290 the chain carries Phosphoserine. Residues 377–552 enclose the CRAL-TRIO domain; sequence DENLGDDLDK…QYGGLSVDNC (176 aa). The GOLD domain maps to 556–662; the sequence is SDFTHDDIAT…KKMLIYRFKV (107 aa).

Belongs to the patellin family.

The protein localises to the membrane. It is found in the cytoplasm. Carrier protein that may be involved in membrane-trafficking events associated with cell plate formation during cytokinesis. Binds to some hydrophobic molecules such as phosphoinositides and promotes their transfer between the different cellular sites. In Arabidopsis thaliana (Mouse-ear cress), this protein is Patellin-5 (PATL5).